A 135-amino-acid chain; its full sequence is Galectin-1 (135 aa).

Alanine 2 is modified (N-acetylalanine). The 132-residue stretch at 4–135 (GLVASNLNLK…DFKIKCVAFE (132 aa)) folds into the Galectin domain. Lysine 13, lysine 19, and lysine 29 each carry N6-acetyllysine. Serine 30 bears the Phosphoserine mark. A beta-D-galactoside contacts are provided by residues 45–49 (HFNPR), histidine 53, asparagine 62, and 69–72 (WGTE). Residue lysine 108 is modified to N6-acetyllysine; alternate. An N6-succinyllysine; alternate modification is found at lysine 108. Lysine 128 bears the N6-acetyllysine mark.

As to quaternary structure, binds LGALS3BP. Interacts with CD2, CD3, CD4, CD6, CD7, CD43, ALCAM and CD45. Interacts with laminin. Interacts with SUSD2. Exists in a reversible and active monomer-homodimer equilibrium, the mononomer/dimer state is regulated by lectin concentration. Interacts with cargo receptor TMED10; the interaction mediates the translocation from the cytoplasm into the ERGIC (endoplasmic reticulum-Golgi intermediate compartment) and thereby secretion.

The protein resides in the cytoplasm. It is found in the secreted. It localises to the extracellular space. Its subcellular location is the extracellular matrix. Its function is as follows. Lectin that binds beta-galactoside and a wide array of complex carbohydrates. Plays a role in regulating apoptosis, cell proliferation and cell differentiation. Inhibits CD45 protein phosphatase activity and therefore the dephosphorylation of Lyn kinase. Strong inducer of T-cell apoptosis. The sequence is that of Galectin-1 (LGALS1) from Cricetulus griseus (Chinese hamster).